The primary structure comprises 251 residues: CDP-diacylglycerol pyrophosphatase (251 aa).

A helical transmembrane segment spans residues Ala4–Trp24.

The protein belongs to the Cdh family.

The protein localises to the cell inner membrane. The enzyme catalyses a CDP-1,2-diacyl-sn-glycerol + H2O = a 1,2-diacyl-sn-glycero-3-phosphate + CMP + 2 H(+). Its pathway is phospholipid metabolism; CDP-diacylglycerol degradation; phosphatidate from CDP-diacylglycerol: step 1/1. The chain is CDP-diacylglycerol pyrophosphatase from Escherichia coli O81 (strain ED1a).